The sequence spans 27 residues: Trypsin inhibitor 5 (27 aa).

Intrachain disulfides connect Cys1–Cys18, Cys8–Cys20, and Cys14–Cys26.

The protein resides in the secreted. Inhibits trypsin. The protein is Trypsin inhibitor 5 of Sechium edule (Chayote).